The following is a 337-amino-acid chain: Anthranilate phosphoribosyltransferase (337 aa).

Residues Gly82, 85-86 (GD), Thr90, 92-95 (NIST), 110-118 (KHGNRAMSS), and Thr122 each bind 5-phospho-alpha-D-ribose 1-diphosphate. Gly82 is an anthranilate binding site. Ser94 contacts Mg(2+). Asn113 contacts anthranilate. Arg168 is a binding site for anthranilate. The Mg(2+) site is built by Asp226 and Glu227.

Belongs to the anthranilate phosphoribosyltransferase family. In terms of assembly, homodimer. Mg(2+) serves as cofactor.

The enzyme catalyses N-(5-phospho-beta-D-ribosyl)anthranilate + diphosphate = 5-phospho-alpha-D-ribose 1-diphosphate + anthranilate. Its pathway is amino-acid biosynthesis; L-tryptophan biosynthesis; L-tryptophan from chorismate: step 2/5. In terms of biological role, catalyzes the transfer of the phosphoribosyl group of 5-phosphorylribose-1-pyrophosphate (PRPP) to anthranilate to yield N-(5'-phosphoribosyl)-anthranilate (PRA). In Phenylobacterium zucineum (strain HLK1), this protein is Anthranilate phosphoribosyltransferase.